A 385-amino-acid chain; its full sequence is Protein pelota homolog (385 aa).

A Glycyl lysine isopeptide (Lys-Gly) (interchain with G-Cter in SUMO2) cross-link involves residue K162. S374, S380, S381, and S382 each carry phosphoserine.

It belongs to the eukaryotic release factor 1 family. Pelota subfamily. In terms of assembly, component of the Pelota-HBS1L complex, also named Dom34-Hbs1 complex, composed of PELO and HBS1L. Interacts with PINK1. Interacts with ABCE1. Interacts with CNOT4. Requires a divalent metal cation as cofactor.

The protein resides in the cytoplasm. In terms of biological role, component of the Pelota-HBS1L complex, a complex that recognizes stalled ribosomes and triggers the No-Go Decay (NGD) pathway. In the Pelota-HBS1L complex, PELO recognizes ribosomes stalled at the 3' end of an mRNA and engages stalled ribosomes by destabilizing mRNA in the mRNA channel. Following mRNA extraction from stalled ribosomes by the SKI complex, the Pelota-HBS1L complex promotes recruitment of ABCE1, which drives the disassembly of stalled ribosomes, followed by degradation of damaged mRNAs as part of the NGD pathway. As part of the PINK1-regulated signaling, upon mitochondrial damage is recruited to the ribosome/mRNA-ribonucleoprotein complex associated to mitochondrial outer membrane thereby enabling the recruitment of autophagy receptors and induction of mitophagy. This Bos taurus (Bovine) protein is Protein pelota homolog (PELO).